The sequence spans 198 residues: Recombination protein RecR (198 aa).

The C4-type zinc finger occupies C59–C74. The Toprim domain occupies T82–P175.

Belongs to the RecR family.

May play a role in DNA repair. It seems to be involved in an RecBC-independent recombinational process of DNA repair. It may act with RecF and RecO. This is Recombination protein RecR from Desulfitobacterium hafniense (strain Y51).